The primary structure comprises 43 residues: DeltaKappa-actitoxin-Avd4b (43 aa).

3 disulfides stabilise this stretch: C4/C39, C6/C32, and C22/C40.

This sequence belongs to the sea anemone type 3 (BDS) potassium channel toxin family.

The protein resides in the secreted. It localises to the nematocyst. In terms of biological role, acts as a gating modifier on both Kv and Nav ion channels. Voltage-dependently inhibits voltage-gated potassium channels Kv3 (Kv3.1/KCNC1, Kv3.2/KCNC2 and Kv3.4/KCNC4). Slows inactivation of the voltage-gated sodium channel Nav1.7/SCN9A. Inhibits all Kv3.1, Kv3.2 and Kv3.4 by about 50% when tested at a voltage of +40 mV. May act by binding residues in voltage-sensing domains S3b and S4 of Kv3. Tests have been done on human Nav1.7/SCN9A and rat SCG neurons that mostly carry Nav1.7 channels (EC(50)=300 nM). This toxin also reduces blood pressure. The polypeptide is DeltaKappa-actitoxin-Avd4b (Anemonia sulcata (Mediterranean snakelocks sea anemone)).